Reading from the N-terminus, the 178-residue chain is Large ribosomal subunit protein uL5 (178 aa).

Belongs to the universal ribosomal protein uL5 family. As to quaternary structure, part of the 50S ribosomal subunit; contacts the 5S rRNA and probably tRNA. Forms a bridge to the 30S subunit in the 70S ribosome.

In terms of biological role, this is one of the proteins that bind and probably mediate the attachment of the 5S RNA into the large ribosomal subunit, where it forms part of the central protuberance. In the 70S ribosome it contacts protein S13 of the 30S subunit (bridge B1b), connecting the 2 subunits; this bridge is implicated in subunit movement. May contact the P site tRNA; the 5S rRNA and some of its associated proteins might help stabilize positioning of ribosome-bound tRNAs. This is Large ribosomal subunit protein uL5 from Archaeoglobus fulgidus (strain ATCC 49558 / DSM 4304 / JCM 9628 / NBRC 100126 / VC-16).